Reading from the N-terminus, the 359-residue chain is S-geranylgeranyl-glutathione receptor P2RY8 (359 aa).

Residues 1–19 are Extracellular-facing; sequence MQVPNSTGPDNATLQMLRN. N-linked (GlcNAc...) asparagine glycans are attached at residues Asn-5 and Asn-11. A helical membrane pass occupies residues 20–40; it reads PAIAVALPVVYSLVAAVSIPG. Topologically, residues 41 to 57 are cytoplasmic; the sequence is NLFSLWVLCRRMGPRSP. A helical transmembrane segment spans residues 58–78; the sequence is SVIFMINLSVTDLMLASVLPF. Topologically, residues 79–88 are extracellular; the sequence is QIYYHCNRHH. Residues 89–109 traverse the membrane as a helical segment; it reads WVFGVLLCNVVTVAFYANMYS. At 110 to 138 the chain is on the cytoplasmic side; sequence SILTMTCISVERFLGVLYPLSSKRWRRRR. Residues 139 to 159 traverse the membrane as a helical segment; that stretch reads YAVAACAGTWLLLLTALSPLA. Residues 160–187 are Extracellular-facing; the sequence is RTDLTYPVHALGIITCFDVLKWTMLPSV. A helical transmembrane segment spans residues 188 to 208; it reads AMWAVFLFTIFILLFLIPFVI. The Cytoplasmic portion of the chain corresponds to 209–237; that stretch reads TVACYTATILKLLRTEEAHGREQRRRAVG. A helical transmembrane segment spans residues 238–258; the sequence is LAAVVLLAFVTCFAPNNFVLL. At 259–275 the chain is on the extracellular side; sequence AHIVSRLFYGKSYYHVY. Residues 276 to 296 traverse the membrane as a helical segment; that stretch reads KLTLCLSCLNNCLDPFVYYFA. At 297 to 359 the chain is on the cytoplasmic side; it reads SREFQLRLRE…PGLQRQESVF (63 aa). A disordered region spans residues 329-359; the sequence is RTTSVRSEAGAHPEGMEGATRPGLQRQESVF.

This sequence belongs to the G-protein coupled receptor 1 family. As to expression, barely detectable in normal blood leukocytes. Weaker expression was seen in heart, kidney and lung. Not detected in brain. Expressed in B cells and follicular helper T cells in germinal centers (at protein level).

The protein resides in the cell membrane. Functionally, g protein-coupled receptor for S-geranylgeranyl-glutathione (GGG), an endogenous metabolite present in lymphoid tissues. Couples the binding of GGG to the activation of GNA13 and downstream repression of AKT activation in lymphocytes defining their positioning and growth within lymphoid organs. In lymphoid follicles, confines B cells and follicular helper T cells in germinal centers (GCs) in response to GGG local gradients established by GGT5 (via GGG catabolism) and ABCC1 (via extracellular transport) with lower concentrations of GGG found in the follicular dendritic cell network region around which germinal centers are formed. In the bone marrow, also in response to GGG gradients established by GGT5 and ABCC1, it restricts chemotactic transmigration of B cells, T cells and NK cells from blood vessels to the bone marrow parenchyma. Contributes to GNA13-dependent pathway that suppresses GC B cell growth. This is S-geranylgeranyl-glutathione receptor P2RY8 from Homo sapiens (Human).